A 448-amino-acid polypeptide reads, in one-letter code: CCA-adding enzyme (448 aa).

Residues serine 52 and lysine 55 each coordinate ATP. 2 residues coordinate CTP: serine 52 and lysine 55. Mg(2+)-binding residues include aspartate 64, aspartate 66, and aspartate 118. Residues histidine 141, lysine 160, and tyrosine 169 each coordinate ATP. Residues histidine 141, lysine 160, and tyrosine 169 each coordinate CTP.

The protein belongs to the tRNA nucleotidyltransferase/poly(A) polymerase family. Archaeal CCA-adding enzyme subfamily. As to quaternary structure, homodimer. Mg(2+) is required as a cofactor.

The catalysed reaction is a tRNA precursor + 2 CTP + ATP = a tRNA with a 3' CCA end + 3 diphosphate. The enzyme catalyses a tRNA with a 3' CCA end + 2 CTP + ATP = a tRNA with a 3' CCACCA end + 3 diphosphate. In terms of biological role, catalyzes the addition and repair of the essential 3'-terminal CCA sequence in tRNAs without using a nucleic acid template. Adds these three nucleotides in the order of C, C, and A to the tRNA nucleotide-73, using CTP and ATP as substrates and producing inorganic pyrophosphate. tRNA 3'-terminal CCA addition is required both for tRNA processing and repair. Also involved in tRNA surveillance by mediating tandem CCA addition to generate a CCACCA at the 3' terminus of unstable tRNAs. While stable tRNAs receive only 3'-terminal CCA, unstable tRNAs are marked with CCACCA and rapidly degraded. The chain is CCA-adding enzyme from Pyrococcus abyssi (strain GE5 / Orsay).